Consider the following 1378-residue polypeptide: MAQTVLGQKRFRKYYGKIREVLEMPNLIEVQKSSYDLFLKSGDQPQPMDGEGIMGVFQSVFPIKDFNETAVLEFVKYELEKPKYDVEECQQRDMTYSAPLKVTLRLIVFDVDEDTGAKSVKDIKEQDVFMGDMPLMTPNGTFIVNGTERVIVSQMHRSPGVFFDHDKGKTHSSGKLLFACRIIPYRGSWLDFEFDAKDLVFARIDRRRKLPVTTLLYSLGMDQQDIMDAYYDTVTYTHRKGEGWVTKFFPERIRGTRPTQDVVDAATGEVIAEAGKKVTPRAVKQLIDEGNVSEILVPFDGIIGKFAAKDIINEENGAIYVEAGDELTWEVDKDGAVTGGTLKELLDAGIEEIPVLDIDNITVGAYMRNTLAADKNMNRDTALMDIYRVMRPGEPPTVEAASALFDTLFFDSERYDLSAVGRVKMNMRLALDAEDTVRTLRKEDIVSCIKALVDLRDGRGDIDDIDHLGNRRVRSVGELMENQYRVGLLRMERAIKERMSSVEIDTVMPQDLINAKPAAAAVREFFGSSQLSQFMDQTNPLSEVTHKRRLSALGPGGLTRERAGFEVRDVHPTHYGRMCPIETPEGPNIGLINSLATFARVNKYGFIETPYRRVEDGKVTDEVNYMSATEEMRHTVAQANANLDESGSFVNEMVNTRQSGEYTLAPRESVDLIDVSPKQLVSVAASLIPFLENDDANRALMGSNMQRQAVPLLQADAPFVGTGIEGVVARDSGAAIMARRGGFIDQVDATRIVIRATEDLEPGDPGVDIYRLRKFQRSNQNTCINQRPLVKVGDKVGKDDVIADGPSTDLGELALGKNVVVAFMPWNGYNYEDSILISERVARDDVFTSIHIEEFEVAARDTKLGPEEITRDIPNVGEEALRNLDEAGIVYIGADVGPGDILVGKITPKGESPMTPEEKLLRAIFGEKASDVRDTSMRLPPGDFGTVVEVRVFNRHGVEKDERALQIEREEVESLARDRDDEMAILERNIYARLKDMILGKTAVKGPKGVKPGSEITEDLLGTLSRGQWWQLALEDEAEAQMVEALNQQYEAQKRALTARFEDKVEKVRRGDDLPPGVMKMVKVFIAVKRKLQPGDKMAGRHGNKGVISKVVPMEDMPFLADGTPVDFVLNPLGVPSRMNVGQILETHMGWAARGMGLKIDEALGEYRRSGDMTPVREAMRLAYGDEAYEEAISGLDQDDLLERAGNVTRGVPIATPVFDGAKEADVNDALTRAGFDTSGQSDLYDGRTGEKFARQVTVGVKYLLKLHHLVDDKIHARSTGPYSLVTQQPLGGKAQFGGQRFGEMEVWALEAYGAAYTLQEMLTVKSDDVAGRTKVYESIVKGEDNFEAGVPESFNVLVKEVRGLGLNMELLDAEGEE.

The protein belongs to the RNA polymerase beta chain family. The RNAP catalytic core consists of 2 alpha, 1 beta, 1 beta' and 1 omega subunit. When a sigma factor is associated with the core the holoenzyme is formed, which can initiate transcription.

The catalysed reaction is RNA(n) + a ribonucleoside 5'-triphosphate = RNA(n+1) + diphosphate. In terms of biological role, DNA-dependent RNA polymerase catalyzes the transcription of DNA into RNA using the four ribonucleoside triphosphates as substrates. The polypeptide is DNA-directed RNA polymerase subunit beta (Dinoroseobacter shibae (strain DSM 16493 / NCIMB 14021 / DFL 12)).